The following is a 287-amino-acid chain: 4-hydroxybenzoate octaprenyltransferase (287 aa).

Helical transmembrane passes span 7–27, 30–50, 94–114, 118–138, 142–162, 167–187, 209–229, 235–255, and 266–286; these read FISYGYLIRLDKPIGTLLLLW, LWALWLASSGVLDLSILLIFV, VAVASFLALCAFLLIQPLNAF, LSVLALLVAFIYPFTKRFFAM, VLGIAFGFGIPMAYAAILDFI, WFLFTGNIFWAIAYDTAYAMV, VVVIAISYGMLFLSHLWVAQL, YFLVGWFAALACAIYHLKLVS, and FRHNNWLGGFLFLGIVLGLGV.

Belongs to the UbiA prenyltransferase family. The cofactor is Mg(2+).

It is found in the cell inner membrane. The enzyme catalyses all-trans-octaprenyl diphosphate + 4-hydroxybenzoate = 4-hydroxy-3-(all-trans-octaprenyl)benzoate + diphosphate. The protein operates within cofactor biosynthesis; ubiquinone biosynthesis. In terms of biological role, catalyzes the prenylation of para-hydroxybenzoate (PHB) with an all-trans polyprenyl group. Mediates the second step in the final reaction sequence of ubiquinone-8 (UQ-8) biosynthesis, which is the condensation of the polyisoprenoid side chain with PHB, generating the first membrane-bound Q intermediate 3-octaprenyl-4-hydroxybenzoate. The sequence is that of 4-hydroxybenzoate octaprenyltransferase from Polynucleobacter necessarius subsp. necessarius (strain STIR1).